The sequence spans 185 residues: Ribosome maturation factor RimP (185 aa).

The protein belongs to the RimP family.

It is found in the cytoplasm. Required for maturation of 30S ribosomal subunits. The chain is Ribosome maturation factor RimP from Magnetococcus marinus (strain ATCC BAA-1437 / JCM 17883 / MC-1).